We begin with the raw amino-acid sequence, 213 residues long: Ribonuclease T (213 aa).

The Exonuclease domain occupies valine 28–phenylalanine 202. 4 residues coordinate Mg(2+): aspartate 31, glutamate 33, histidine 189, and aspartate 194. Histidine 189 functions as the Proton donor/acceptor in the catalytic mechanism.

It belongs to the RNase T family. In terms of assembly, homodimer. It depends on Mg(2+) as a cofactor.

Its function is as follows. Trims short 3' overhangs of a variety of RNA species, leaving a one or two nucleotide 3' overhang. Responsible for the end-turnover of tRNA: specifically removes the terminal AMP residue from uncharged tRNA (tRNA-C-C-A). Also appears to be involved in tRNA biosynthesis. The chain is Ribonuclease T from Xanthomonas euvesicatoria pv. vesicatoria (strain 85-10) (Xanthomonas campestris pv. vesicatoria).